The chain runs to 508 residues: Putative POTE ankyrin domain family member M (508 aa).

ANK repeat units lie at residues 172-201 (QKRTALHLASANGNSEVVKLLLDRRCQLNI), 205-234 (KKRTALTKAVQCQEDECALMLLEHGTDPNI), 238-267 (YGNTALHYAIYNEDKLMAKALLLYGADIES), 271-300 (HGLTPLLLGVHEQKQQVVKFLIKKKANLNA), and 304-333 (YGRTVLILAVCCGSASIVSLLLEQNIDVSS). Positions 369-487 (SSENSNPEQD…KQLSEEQNTG (119 aa)) are disordered. Basic and acidic residues-rich tracts occupy residues 377-392 (QDLKLTSEEESQRLKG) and 406-421 (EINKGGDRKVEEEMKK). Residues 476–487 (TQKQLSEEQNTG) show a composition bias toward polar residues.

It belongs to the POTE family.

The chain is Putative POTE ankyrin domain family member M (POTEM) from Homo sapiens (Human).